The primary structure comprises 207 residues: MARKKVQRKLDGWKSKEWYNIEAPAYLNRAIVGNTMAGDPSLLVGRNIETTVGELTNDMTKNNTKVILRINNVVGDVATTDLMGHELTTDYIRSIVKRQTSRIDANIDVKTKDGYIIRVKPTCFTIKRARSSQIKAIREMMVNIVAKRASEADFETFMQEAILGRLSAAIYRQAKFIYPLRRVEIRKTQVEAAPAPAASAAPEPAAA.

Belongs to the eukaryotic ribosomal protein eS1 family.

The chain is Small ribosomal subunit protein eS1 from Methanosarcina barkeri (strain Fusaro / DSM 804).